The primary structure comprises 207 residues: Vascular endothelial growth factor B (207 aa).

The first 21 residues, 1–21, serve as a signal peptide directing secretion; the sequence is MSPLLRRLLLAVLLQLAPAQA. 3 disulfides stabilise this stretch: C47–C89, C78–C122, and C82–C124. Basic and acidic residues predominate over residues 124-139; that stretch reads CRPKKRESAVKPDRAS. Positions 124-207 are disordered; it reads CRPKKRESAV…AASSVVKGGA (84 aa). The span at 174–201 shows a compositional bias: low complexity; the sequence is PSAHAAPSAASALTPGPATAAADAAASS.

It belongs to the PDGF/VEGF growth factor family. As to quaternary structure, homodimer; disulfide-linked. Can also form heterodimer with VEGF. In terms of processing, VEGF-B186 is O-glycosylated.

Its subcellular location is the secreted. In terms of biological role, growth factor for endothelial cells. VEGF-B167 binds heparin and neuropilin-1 whereas the binding to neuropilin-1 of VEGF-B186 is regulated by proteolysis. The polypeptide is Vascular endothelial growth factor B (VEGFB) (Bos taurus (Bovine)).